Here is a 267-residue protein sequence, read N- to C-terminus: Undecaprenyl-diphosphatase (267 aa).

The next 8 membrane-spanning stretches (helical) occupy residues 1–21, 39–59, 83–103, 111–131, 144–164, 189–209, 218–238, and 246–266; these read MSYF…FLPI, QGLA…VIYF, AKLA…GLVM, LRSA…LWWV, AGWK…IPGT, FLMS…KLVT, FLLT…HLFL, and MTPF…YLLM.

This sequence belongs to the UppP family.

It is found in the cell inner membrane. It catalyses the reaction di-trans,octa-cis-undecaprenyl diphosphate + H2O = di-trans,octa-cis-undecaprenyl phosphate + phosphate + H(+). Catalyzes the dephosphorylation of undecaprenyl diphosphate (UPP). Confers resistance to bacitracin. In Vibrio vulnificus (strain CMCP6), this protein is Undecaprenyl-diphosphatase.